A 92-amino-acid polypeptide reads, in one-letter code: MKTLLLTLVVVTIVCLDLGDSLICYMGPKTPRTCPPGENLCYTKTWCDAFCSIRGRRVDLGCAATCPTAKPGVDITCCSTDKCNPHPAHQSR.

Residues 1-21 (MKTLLLTLVVVTIVCLDLGDS) form the signal peptide. 5 disulfide bridges follow: cysteine 24–cysteine 41, cysteine 34–cysteine 62, cysteine 47–cysteine 51, cysteine 66–cysteine 77, and cysteine 78–cysteine 83.

This sequence belongs to the three-finger toxin family. Long-chain subfamily. Type II alpha-neurotoxin sub-subfamily. As to expression, expressed by the venom gland.

It is found in the secreted. In terms of biological role, binds with high affinity to muscular (alpha-1/CHRNA1) and neuronal (alpha-7/CHRNA7) nicotinic acetylcholine receptor (nAChR) and inhibits acetylcholine from binding to the receptor, thereby impairing neuromuscular and neuronal transmission. In Drysdalia coronoides (White-lipped snake), this protein is Long neurotoxin 77.